Here is a 243-residue protein sequence, read N- to C-terminus: Orotidine 5'-phosphate decarboxylase (243 aa).

Substrate is bound by residues aspartate 19, lysine 41, 69 to 78, threonine 124, arginine 185, glutamine 194, glycine 214, and arginine 215; that span reads DLKFFDIPAT. Catalysis depends on lysine 71, which acts as the Proton donor.

This sequence belongs to the OMP decarboxylase family. Type 1 subfamily. In terms of assembly, homodimer.

The enzyme catalyses orotidine 5'-phosphate + H(+) = UMP + CO2. Its pathway is pyrimidine metabolism; UMP biosynthesis via de novo pathway; UMP from orotate: step 2/2. Its function is as follows. Catalyzes the decarboxylation of orotidine 5'-monophosphate (OMP) to uridine 5'-monophosphate (UMP). This chain is Orotidine 5'-phosphate decarboxylase, found in Xanthomonas axonopodis pv. citri (strain 306).